The following is a 305-amino-acid chain: MSKVKKQPKIEALQNVDITFTNVSYVYSPKTPYEYTSLQDINVVIKPGKITAIIGSTGSGKSTLIQHINGLLIPTTGVVDTNGFIIKAKQKRIKNIKQLRKSIGLVFQFPEYQLFEETIEKDIMFGPVHLGETKEVARENAKKYLEMVGLPLNYLERSPFDLSGGQKRRVAIAGILAMEGNTLILDEPTAGLDPEGEEDFIKLFQRINKEQNKRIILVTHNMDHVLEIADEVIALKEGRVFKVGSPFEIFKDKNLLQELLIEPPKIYHLIYQLQEKGLDLTNVNIRTIDQLAKKIIEHKEQKRKG.

The region spanning 13 to 262 (LQNVDITFTN…KNLLQELLIE (250 aa)) is the ABC transporter domain. ATP is bound at residue 55 to 62 (GSTGSGKS).

The protein belongs to the ABC transporter superfamily. Energy-coupling factor EcfA family. In terms of assembly, forms a stable energy-coupling factor (ECF) transporter complex composed of 2 membrane-embedded substrate-binding proteins (S component), 2 ATP-binding proteins (A component) and 2 transmembrane proteins (T component).

It is found in the cell membrane. Functionally, ATP-binding (A) component of a common energy-coupling factor (ECF) ABC-transporter complex. Unlike classic ABC transporters this ECF transporter provides the energy necessary to transport a number of different substrates. The protein is Energy-coupling factor transporter ATP-binding protein EcfA2 of Spiroplasma kunkelii.